Consider the following 422-residue polypeptide: Blood group Rh(D) polypeptide (422 aa).

Helical transmembrane passes span 13–33, 43–63, 76–96, 113–135, 137–159, 170–190, 215–235, 244–266, 272–292, 294–314, 335–355, and 372–392; these read LPLW…FLIG, FMAI…GFGF, VAFS…LDYF, FLSI…AVLG, VNLV…IRVA, IIMM…AWWL, LFAM…NSAL, AVFN…SALS, INMV…GAPS, LISS…ISIW, YTFG…HIIA, and VGAL…TGCL.

This sequence belongs to the ammonium transporter (TC 2.A.49) family. Rh subfamily. Palmitoylated.

It is found in the cell membrane. Functionally, may be part of an oligomeric complex which is likely to have a transport or channel function in the erythrocyte membrane. This is Blood group Rh(D) polypeptide (Rhd) from Rattus norvegicus (Rat).